A 425-amino-acid chain; its full sequence is Serine hydroxymethyltransferase (425 aa).

(6S)-5,6,7,8-tetrahydrofolate contacts are provided by residues Leu120 and 124–126; that span reads GHL. At Lys229 the chain carries N6-(pyridoxal phosphate)lysine. 353–355 is a (6S)-5,6,7,8-tetrahydrofolate binding site; it reads SPF.

This sequence belongs to the SHMT family. As to quaternary structure, homodimer. The cofactor is pyridoxal 5'-phosphate.

It is found in the cytoplasm. The enzyme catalyses (6R)-5,10-methylene-5,6,7,8-tetrahydrofolate + glycine + H2O = (6S)-5,6,7,8-tetrahydrofolate + L-serine. It participates in one-carbon metabolism; tetrahydrofolate interconversion. It functions in the pathway amino-acid biosynthesis; glycine biosynthesis; glycine from L-serine: step 1/1. Catalyzes the reversible interconversion of serine and glycine with tetrahydrofolate (THF) serving as the one-carbon carrier. This reaction serves as the major source of one-carbon groups required for the biosynthesis of purines, thymidylate, methionine, and other important biomolecules. Also exhibits THF-independent aldolase activity toward beta-hydroxyamino acids, producing glycine and aldehydes, via a retro-aldol mechanism. This chain is Serine hydroxymethyltransferase, found in Thermosynechococcus vestitus (strain NIES-2133 / IAM M-273 / BP-1).